Reading from the N-terminus, the 100-residue chain is Aspartyl/glutamyl-tRNA(Asn/Gln) amidotransferase subunit C (100 aa).

Belongs to the GatC family. As to quaternary structure, heterotrimer of A, B and C subunits.

The catalysed reaction is L-glutamyl-tRNA(Gln) + L-glutamine + ATP + H2O = L-glutaminyl-tRNA(Gln) + L-glutamate + ADP + phosphate + H(+). The enzyme catalyses L-aspartyl-tRNA(Asn) + L-glutamine + ATP + H2O = L-asparaginyl-tRNA(Asn) + L-glutamate + ADP + phosphate + 2 H(+). Functionally, allows the formation of correctly charged Asn-tRNA(Asn) or Gln-tRNA(Gln) through the transamidation of misacylated Asp-tRNA(Asn) or Glu-tRNA(Gln) in organisms which lack either or both of asparaginyl-tRNA or glutaminyl-tRNA synthetases. The reaction takes place in the presence of glutamine and ATP through an activated phospho-Asp-tRNA(Asn) or phospho-Glu-tRNA(Gln). This Dictyoglomus thermophilum (strain ATCC 35947 / DSM 3960 / H-6-12) protein is Aspartyl/glutamyl-tRNA(Asn/Gln) amidotransferase subunit C.